We begin with the raw amino-acid sequence, 417 residues long: RH-like protein ID (417 aa).

11 helical membrane-spanning segments follow: residues Cys12 to Thr32, Leu44 to Phe64, Val77 to Phe97, Ile125 to Val145, Ile172 to Ala192, Thr203 to Phe223, Val238 to Leu258, Ile265 to Cys285, Leu287 to Gly307, Asn331 to Thr351, and Met358 to Leu378.

This sequence belongs to the ammonium transporter (TC 2.A.49) family. Rh subfamily.

The protein localises to the membrane. May be part of an oligomeric complex which is likely to have a transport or channel function in the erythrocyte membrane. This is RH-like protein ID from Gorilla gorilla gorilla (Western lowland gorilla).